A 146-amino-acid chain; its full sequence is Spermidine export protein MdtJ (146 aa).

The next 4 helical transmembrane spans lie at 1–21, 31–51, 54–74, and 76–96; these read MIYW…TLSM, TGMI…AIAV, VALG…ITTF, and VLWF…MLIA.

Belongs to the drug/metabolite transporter (DMT) superfamily. Small multidrug resistance (SMR) (TC 2.A.7.1) family. MdtJ subfamily. In terms of assembly, forms a complex with MdtI.

The protein resides in the cell inner membrane. Its function is as follows. Catalyzes the excretion of spermidine. The polypeptide is Spermidine export protein MdtJ (Proteus mirabilis (strain HI4320)).